Consider the following 260-residue polypeptide: Ribosomal RNA small subunit methyltransferase J (260 aa).

S-adenosyl-L-methionine-binding positions include 125–126 (ER) and Asp179.

The protein belongs to the methyltransferase superfamily. RsmJ family.

Its subcellular location is the cytoplasm. It carries out the reaction guanosine(1516) in 16S rRNA + S-adenosyl-L-methionine = N(2)-methylguanosine(1516) in 16S rRNA + S-adenosyl-L-homocysteine + H(+). Its function is as follows. Specifically methylates the guanosine in position 1516 of 16S rRNA. The polypeptide is Ribosomal RNA small subunit methyltransferase J (Pseudomonas entomophila (strain L48)).